Consider the following 241-residue polypeptide: Tetraspanin-1 (241 aa).

Residues 1–11 are Cytoplasmic-facing; it reads MQCFSFIKTMM. The helical transmembrane segment at 12 to 34 threads the bilayer; that stretch reads ILFNLLIFLCGAALLAVGIWVSI. At 35–53 the chain is on the extracellular side; that stretch reads DGASFLKIFGPLSSSAMQF. The chain crosses the membrane as a helical span at residues 54–76; sequence VNVGYFLIAAGVVVFALGFLGCY. The Cytoplasmic segment spans residues 77-88; that stretch reads GAKTESKCALMT. A helical transmembrane segment spans residues 89-111; it reads FFFILLLIFIAEVAAAVVALVYT. The Extracellular segment spans residues 112–214; the sequence is TMAEHFLTLL…LYDIRTNAVT (103 aa). N-linked (GlcNAc...) asparagine glycans are attached at residues Asn-141, Asn-154, Asn-178, and Asn-184. A helical membrane pass occupies residues 215-237; that stretch reads VGGVAAGIGGLELAAMIVSMYLY. Residues 238–241 lie on the Cytoplasmic side of the membrane; sequence CNLQ.

Belongs to the tetraspanin (TM4SF) family. As to quaternary structure, interacts with SLC19A2. Interacts with NTRK1/TRKA.

It localises to the lysosome membrane. Its function is as follows. Structural component of specialized membrane microdomains known as tetraspanin-enriched microdomains (TERMs), which act as platforms for receptor clustering and signaling. Participates thereby in diverse biological functions such as cell signal transduction, adhesion, migration and protein trafficking. Regulates neuronal differentiation in response to NGF by facilitating NGF-mediated activation of NTRK1/TRKA receptor tyrosine kinase and subsequent downstream signaling pathways. Plays a role in the inhibition of TNFalpha-induced apoptosis. Mechanistically, inhibits the NF-kappa-B signaling pathway by blocking phosphorylation of CHUK. Also promotes the stability of the thiamine transporter 1/SLC19A2 in intestinal epithelial cells leading to an increase of thiamine uptake process. This is Tetraspanin-1 (TSPAN1) from Pongo abelii (Sumatran orangutan).